Here is a 269-residue protein sequence, read N- to C-terminus: Putative aga operon transcriptional repressor (269 aa).

Residues 15–70 (TSERREQIIQRLRQQGSVQVNDLSALYGVSTVTIRNDLAFLEKQGIAVRAYGGALI) enclose the HTH deoR-type domain. Positions 32–51 (VQVNDLSALYGVSTVTIRND) form a DNA-binding region, H-T-H motif.

Its function is as follows. Probable repressor for the aga operon for N-acetyl galactosamine transport and metabolism. This is Putative aga operon transcriptional repressor (agaR) from Escherichia coli O157:H7.